The sequence spans 447 residues: Probable glycine dehydrogenase (decarboxylating) subunit 1 (447 aa).

It belongs to the GcvP family. N-terminal subunit subfamily. The glycine cleavage system is composed of four proteins: P, T, L and H. In this organism, the P 'protein' is a heterodimer of two subunits.

It catalyses the reaction N(6)-[(R)-lipoyl]-L-lysyl-[glycine-cleavage complex H protein] + glycine + H(+) = N(6)-[(R)-S(8)-aminomethyldihydrolipoyl]-L-lysyl-[glycine-cleavage complex H protein] + CO2. Its function is as follows. The glycine cleavage system catalyzes the degradation of glycine. The P protein binds the alpha-amino group of glycine through its pyridoxal phosphate cofactor; CO(2) is released and the remaining methylamine moiety is then transferred to the lipoamide cofactor of the H protein. This chain is Probable glycine dehydrogenase (decarboxylating) subunit 1, found in Bacillus anthracis (strain A0248).